The chain runs to 547 residues: Chaperonin GroEL (547 aa).

ATP is bound by residues 30–33 (TLGP), Lys-51, 87–91 (DGTTT), Gly-415, and Asp-495.

It belongs to the chaperonin (HSP60) family. In terms of assembly, forms a cylinder of 14 subunits composed of two heptameric rings stacked back-to-back. Interacts with the co-chaperonin GroES.

The protein localises to the cytoplasm. It carries out the reaction ATP + H2O + a folded polypeptide = ADP + phosphate + an unfolded polypeptide.. Its function is as follows. Together with its co-chaperonin GroES, plays an essential role in assisting protein folding. The GroEL-GroES system forms a nano-cage that allows encapsulation of the non-native substrate proteins and provides a physical environment optimized to promote and accelerate protein folding. The polypeptide is Chaperonin GroEL (Shewanella pealeana (strain ATCC 700345 / ANG-SQ1)).